A 754-amino-acid polypeptide reads, in one-letter code: 5-methyltetrahydropteroyltriglutamate--homocysteine methyltransferase (754 aa).

Residues 15–18 and K114 each bind 5-methyltetrahydropteroyltri-L-glutamate; that span reads RELK. L-homocysteine is bound by residues 430–432 and E483; that span reads IGS. Residues 430–432 and E483 contribute to the L-methionine site; that span reads IGS. Residues 514–515 and W560 contribute to the 5-methyltetrahydropteroyltri-L-glutamate site; that span reads RC. Residue D598 coordinates L-homocysteine. An L-methionine-binding site is contributed by D598. Residue E604 participates in 5-methyltetrahydropteroyltri-L-glutamate binding. 3 residues coordinate Zn(2+): H641, C643, and E665. The Proton donor role is filled by H694. Position 726 (C726) interacts with Zn(2+).

The protein belongs to the vitamin-B12 independent methionine synthase family. The cofactor is Zn(2+).

It catalyses the reaction 5-methyltetrahydropteroyltri-L-glutamate + L-homocysteine = tetrahydropteroyltri-L-glutamate + L-methionine. The protein operates within amino-acid biosynthesis; L-methionine biosynthesis via de novo pathway; L-methionine from L-homocysteine (MetE route): step 1/1. Functionally, catalyzes the transfer of a methyl group from 5-methyltetrahydrofolate to homocysteine resulting in methionine formation. This is 5-methyltetrahydropteroyltriglutamate--homocysteine methyltransferase from Campylobacter jejuni subsp. doylei (strain ATCC BAA-1458 / RM4099 / 269.97).